We begin with the raw amino-acid sequence, 406 residues long: Leucine aminopeptidase 1 (406 aa).

An N-terminal signal peptide occupies residues 1 to 18 (MKVTNASLLALLLPAVSG). Residues 19–94 (RFVETGEPDR…LRAMTASRKK (76 aa)) constitute a propeptide that is removed on maturation. N186 carries N-linked (GlcNAc...) asparagine glycosylation. Zn(2+) is bound by residues H194, D213, E252, and D279. N306 carries N-linked (GlcNAc...) asparagine glycosylation. Residues C328 and C332 are joined by a disulfide bond. Zn(2+) is bound at residue H361.

The protein belongs to the peptidase M28 family. M28E subfamily. In terms of assembly, monomer. Zn(2+) is required as a cofactor.

It is found in the secreted. In terms of biological role, extracellular aminopeptidase that allows assimilation of proteinaceous substrates. The chain is Leucine aminopeptidase 1 (LAP1) from Chaetomium globosum (strain ATCC 6205 / CBS 148.51 / DSM 1962 / NBRC 6347 / NRRL 1970) (Soil fungus).